The sequence spans 448 residues: Tryptophan dimethylallyltransferase 1 (448 aa).

L-tryptophan-binding positions include 80–81 and Glu89; that span reads IL. Positions 100, 186, and 188 each coordinate substrate. Positions 190 and 249 each coordinate L-tryptophan. 7 residues coordinate substrate: Arg262, Lys264, Tyr266, Gln348, Tyr350, Tyr414, and Tyr418.

It belongs to the tryptophan dimethylallyltransferase family. Homodimer.

It carries out the reaction L-tryptophan + dimethylallyl diphosphate = 4-(3-methylbut-2-enyl)-L-tryptophan + diphosphate. It functions in the pathway alkaloid biosynthesis; ergot alkaloid biosynthesis. Functionally, tryptophan dimethylallyltransferase; part of the gene cluster that mediates the biosynthesis of fungal ergot alkaloid. DmaW catalyzes the first step of ergot alkaloid biosynthesis by condensing dimethylallyl diphosphate (DMAP) and tryptophan to form 4-dimethylallyl-L-tryptophan. The second step is catalyzed by the methyltransferase easF that methylates 4-dimethylallyl-L-tryptophan in the presence of S-adenosyl-L-methionine, resulting in the formation of 4-dimethylallyl-L-abrine. The catalase easC and the FAD-dependent oxidoreductase easE then transform 4-dimethylallyl-L-abrine to chanoclavine-I which is further oxidized by easD in the presence of NAD(+), resulting in the formation of chanoclavine-I aldehyde. Agroclavine dehydrogenase easG then mediates the conversion of chanoclavine-I aldehyde to agroclavine via a non-enzymatic adduct reaction: the substrate is an iminium intermediate that is formed spontaneously from chanoclavine-I aldehyde in the presence of glutathione. The presence of easA is not required to complete this reaction. Further conversion of agroclavine to paspalic acid is a two-step process involving oxidation of agroclavine to elymoclavine and of elymoclavine to paspalic acid, the second step being performed by the elymoclavine oxidase cloA. Paspalic acid is then further converted to D-lysergic acid. Ergopeptines are assembled from D-lysergic acid and three different amino acids by the D-lysergyl-peptide-synthetases composed each of a monomudular and a trimodular nonribosomal peptide synthetase subunit. LpsB and lpsC encode the monomodular subunits responsible for D-lysergic acid activation and incorporation into the ergopeptine backbone. LpsA1 and A2 subunits encode the trimodular nonribosomal peptide synthetase assembling the tripeptide portion of ergopeptines. LpsA1 is responsible for formation of the major ergopeptine, ergotamine, and lpsA2 for alpha-ergocryptine, the minor ergopeptine of the total alkaloid mixture elaborated by C.purpurea. D-lysergyl-tripeptides are assembled by the nonribosomal peptide synthetases and released as N-(D-lysergyl-aminoacyl)-lactams. Cyclolization of the D-lysergyl-tripeptides is performed by the Fe(2+)/2-ketoglutarate-dependent dioxygenase easH which introduces a hydroxyl group into N-(D-lysergyl-aminoacyl)-lactam at alpha-C of the aminoacyl residue followed by spontaneous condensation with the terminal lactam carbonyl group. The protein is Tryptophan dimethylallyltransferase 1 of Claviceps purpurea (Ergot fungus).